The primary structure comprises 616 residues: Elongation factor 4 (616 aa).

The 182-residue stretch at 14–195 (SRIRNFCIIA…EVIRQVPPPV (182 aa)) folds into the tr-type G domain. GTP contacts are provided by residues 26–31 (DHGKST) and 142–145 (NKID).

It belongs to the TRAFAC class translation factor GTPase superfamily. Classic translation factor GTPase family. LepA subfamily.

The protein localises to the cell membrane. It catalyses the reaction GTP + H2O = GDP + phosphate + H(+). Required for accurate and efficient protein synthesis under certain stress conditions. May act as a fidelity factor of the translation reaction, by catalyzing a one-codon backward translocation of tRNAs on improperly translocated ribosomes. Back-translocation proceeds from a post-translocation (POST) complex to a pre-translocation (PRE) complex, thus giving elongation factor G a second chance to translocate the tRNAs correctly. Binds to ribosomes in a GTP-dependent manner. This chain is Elongation factor 4, found in Nocardia farcinica (strain IFM 10152).